The chain runs to 79 residues: MKLTCVLIITVLFLTASQLITADYSRDQRQYRAVRLGDEMRNFKGARDCGGQGEGCYTQPCCPGLRCRGGGTGGGVCQL.

An N-terminal signal peptide occupies residues methionine 1–alanine 22. Residues aspartate 23–arginine 47 constitute a propeptide that is removed on maturation. Intrachain disulfides connect cysteine 49–cysteine 62, cysteine 56–cysteine 67, and cysteine 61–cysteine 77. Proline 60 and proline 63 each carry 4-hydroxyproline.

In terms of tissue distribution, expressed by the venom duct.

It localises to the secreted. Its function is as follows. Ion channel inhibitor that inhibits the increase in intracellular calcium upon depolarization in DRG neurons. In vivo, both intraperitoneal and intracranial injections into mice induce hyperactivity. The chain is Conotoxin Vi6.1 from Conus virgo (Virgin cone).